The chain runs to 338 residues: Phenylalanine--tRNA ligase alpha subunit (338 aa).

A Mg(2+)-binding site is contributed by Glu-253.

The protein belongs to the class-II aminoacyl-tRNA synthetase family. Phe-tRNA synthetase alpha subunit type 1 subfamily. In terms of assembly, tetramer of two alpha and two beta subunits. Requires Mg(2+) as cofactor.

It is found in the cytoplasm. It catalyses the reaction tRNA(Phe) + L-phenylalanine + ATP = L-phenylalanyl-tRNA(Phe) + AMP + diphosphate + H(+). The chain is Phenylalanine--tRNA ligase alpha subunit from Legionella pneumophila (strain Lens).